Consider the following 513-residue polypeptide: Zinc finger CCCH-type with G patch domain-containing protein (513 aa).

The segment at 155 to 178 (PCSYYLEGECRFDEAKCRFSHGAL) adopts a C3H1-type zinc-finger fold. Composition is skewed to acidic residues over residues 252–261 (DQDEDDELSS) and 273–283 (SDEAESDMDDL). Residues 252 to 283 (DQDEDDELSSEESTSSMRDASSDEAESDMDDL) form a disordered region. One can recognise a G-patch domain in the interval 312-358 (TRGIGSKLMEKMGYIHGTGLGSDGRGIVTPVSAQILPQGRSLDACME). Positions 477–495 (QVQMQSHKQELATLQAQER) are enriched in polar residues. Positions 477 to 513 (QVQMQSHKQELATLQAQERSLSKEQQTRKSKNKMFEF) are disordered. The span at 496-513 (SLSKEQQTRKSKNKMFEF) shows a compositional bias: basic and acidic residues.

It is found in the nucleus. Transcription repressor. The chain is Zinc finger CCCH-type with G patch domain-containing protein from Drosophila simulans (Fruit fly).